The chain runs to 288 residues: MSNLCRNIKVFFKVFLYRFKQNKLNQAAGYLTYSTTLALVPLIMVFFSVFAAFPVFNEITGELKQFIFTNFAPSTGDAVGEYIDQFVNNSKQMSAVGIISLIVVALMLIHSIDRTLNSIWLDTSVRPAIFSFAIYWLILTLGPIVIATSIGISTYVTKFATYTFEQDFGLSVGIKLLSLMPFFLTWFIFTVLYMVVPNKKVSIIHSAAGALIAAVFFTLGKQAFTWYITTFPSYQLIYGAMATLPIMLLWIQLSWTAVLLGAQLSAVLADIRSLDCGNIQIEKIKEEK.

A run of 6 helical transmembrane segments spans residues 36 to 56 (TLAL…FPVF), 92 to 112 (QMSA…IHSI), 127 to 147 (PAIF…IVIA), 176 to 196 (LLSL…YMVV), 200 to 220 (KVSI…FTLG), and 240 to 260 (AMAT…AVLL).

This sequence belongs to the UPF0761 family.

It is found in the cell inner membrane. The polypeptide is UPF0761 membrane protein HS_0693 (Histophilus somni (strain 129Pt) (Haemophilus somnus)).